Consider the following 663-residue polypeptide: UvrABC system protein B (663 aa).

A Helicase ATP-binding domain is found at 31-418; sequence DNIEGGEKAQ…TDTVVEQIIR (388 aa). 44 to 51 contributes to the ATP binding site; the sequence is GATGTGKT. The Beta-hairpin signature appears at 97-120; it reads YYDYYQPEAYVPSSDTYIEKDSSV. Positions 435 to 601 constitute a Helicase C-terminal domain; it reads QMDDLLGEIN…TIKKEIRDLI (167 aa). A UVR domain is found at 627 to 662; that stretch reads QAEIKALQQQMQEAAELLDFELAAQIRDVILELKAI.

It belongs to the UvrB family. Forms a heterotetramer with UvrA during the search for lesions. Interacts with UvrC in an incision complex.

The protein resides in the cytoplasm. Its function is as follows. The UvrABC repair system catalyzes the recognition and processing of DNA lesions. A damage recognition complex composed of 2 UvrA and 2 UvrB subunits scans DNA for abnormalities. Upon binding of the UvrA(2)B(2) complex to a putative damaged site, the DNA wraps around one UvrB monomer. DNA wrap is dependent on ATP binding by UvrB and probably causes local melting of the DNA helix, facilitating insertion of UvrB beta-hairpin between the DNA strands. Then UvrB probes one DNA strand for the presence of a lesion. If a lesion is found the UvrA subunits dissociate and the UvrB-DNA preincision complex is formed. This complex is subsequently bound by UvrC and the second UvrB is released. If no lesion is found, the DNA wraps around the other UvrB subunit that will check the other stand for damage. In Streptococcus agalactiae serotype III (strain NEM316), this protein is UvrABC system protein B.